Reading from the N-terminus, the 455-residue chain is Asparagine--tRNA ligase (455 aa).

The protein belongs to the class-II aminoacyl-tRNA synthetase family. As to quaternary structure, homodimer.

The protein localises to the cytoplasm. The catalysed reaction is tRNA(Asn) + L-asparagine + ATP = L-asparaginyl-tRNA(Asn) + AMP + diphosphate + H(+). The chain is Asparagine--tRNA ligase from Mycoplasma pneumoniae (strain ATCC 29342 / M129 / Subtype 1) (Mycoplasmoides pneumoniae).